The chain runs to 388 residues: S-adenosylmethionine synthase (388 aa).

His-17 contacts ATP. Residue Asp-19 participates in Mg(2+) binding. Glu-45 lines the K(+) pocket. L-methionine contacts are provided by Glu-58 and Gln-102. Residues 102-112 (QSVHIAQGVDA) are flexible loop. Residues 167-169 (DAK), Asp-241, 247-248 (RK), Ala-264, and Lys-268 each bind ATP. Position 241 (Asp-241) interacts with L-methionine. Residue Lys-272 coordinates L-methionine.

It belongs to the AdoMet synthase family. Homotetramer; dimer of dimers. Mg(2+) serves as cofactor. It depends on K(+) as a cofactor.

Its subcellular location is the cytoplasm. The catalysed reaction is L-methionine + ATP + H2O = S-adenosyl-L-methionine + phosphate + diphosphate. It participates in amino-acid biosynthesis; S-adenosyl-L-methionine biosynthesis; S-adenosyl-L-methionine from L-methionine: step 1/1. Catalyzes the formation of S-adenosylmethionine (AdoMet) from methionine and ATP. The overall synthetic reaction is composed of two sequential steps, AdoMet formation and the subsequent tripolyphosphate hydrolysis which occurs prior to release of AdoMet from the enzyme. The protein is S-adenosylmethionine synthase of Maricaulis maris (strain MCS10) (Caulobacter maris).